A 381-amino-acid chain; its full sequence is Creatine kinase M-type (381 aa).

The Phosphagen kinase N-terminal domain occupies 11–98 (KLNYKPEEEY…FDPIIQDRHG (88 aa)). Residues 125–367 (YVLSSRVRTG…KLMVEMEKKL (243 aa)) form the Phosphagen kinase C-terminal domain. Residue 128–132 (SSRVR) participates in ATP binding. S164 bears the Phosphoserine mark. T166 is modified (phosphothreonine). At S178 the chain carries Phosphoserine. Residue T180 is modified to Phosphothreonine. An ATP-binding site is contributed by H191. A Phosphoserine modification is found at S199. ATP contacts are provided by R236 and R292. 2 positions are modified to phosphothreonine: T313 and T322. ATP-binding positions include 320-325 (RGTGGV) and D335. S372 carries the post-translational modification Phosphoserine.

Belongs to the ATP:guanido phosphotransferase family. Dimer of identical or non-identical chains, which can be either B (brain type) or M (muscle type). With MM being the major form in skeletal muscle and myocardium, MB existing in myocardium, and BB existing in many tissues, especially brain.

The protein resides in the cytoplasm. It carries out the reaction creatine + ATP = N-phosphocreatine + ADP + H(+). In terms of biological role, reversibly catalyzes the transfer of phosphate between ATP and various phosphogens (e.g. creatine phosphate). Creatine kinase isoenzymes play a central role in energy transduction in tissues with large, fluctuating energy demands, such as skeletal muscle, heart, brain and spermatozoa. In Canis lupus familiaris (Dog), this protein is Creatine kinase M-type (CKM).